The chain runs to 236 residues: Large ribosomal subunit protein uL3 (236 aa).

Positions 139–163 are disordered; that stretch reads ARDSSTTHEHHRHVGAIGQRKTPGK.

The protein belongs to the universal ribosomal protein uL3 family. As to quaternary structure, part of the 50S ribosomal subunit. Forms a cluster with proteins L14 and L19.

Functionally, one of the primary rRNA binding proteins, it binds directly near the 3'-end of the 23S rRNA, where it nucleates assembly of the 50S subunit. This is Large ribosomal subunit protein uL3 from Anaeromyxobacter sp. (strain Fw109-5).